A 454-amino-acid chain; its full sequence is tRNA modification GTPase MnmE (454 aa).

Residues Arg-23, Glu-80, and Lys-120 each coordinate (6S)-5-formyl-5,6,7,8-tetrahydrofolate. The TrmE-type G domain maps to 216–377 (GMKVVIAGRP…LRNHLKQSMG (162 aa)). Asn-226 contacts K(+). GTP-binding positions include 226–231 (NAGKSS), 245–251 (TDIAGTT), 270–273 (DTAG), 335–338 (NKAD), and 358–360 (SAR). Ser-230 lines the Mg(2+) pocket. K(+)-binding residues include Thr-245, Ile-247, and Thr-250. Thr-251 is a Mg(2+) binding site. Lys-454 lines the (6S)-5-formyl-5,6,7,8-tetrahydrofolate pocket.

The protein belongs to the TRAFAC class TrmE-Era-EngA-EngB-Septin-like GTPase superfamily. TrmE GTPase family. In terms of assembly, homodimer. Heterotetramer of two MnmE and two MnmG subunits. Requires K(+) as cofactor.

Its subcellular location is the cytoplasm. In terms of biological role, exhibits a very high intrinsic GTPase hydrolysis rate. Involved in the addition of a carboxymethylaminomethyl (cmnm) group at the wobble position (U34) of certain tRNAs, forming tRNA-cmnm(5)s(2)U34. This chain is tRNA modification GTPase MnmE, found in Salmonella choleraesuis (strain SC-B67).